The chain runs to 100 residues: Integration host factor subunit beta (100 aa).

The segment at 81–100 (KPGKELRDRVNEDEHEEAHT) is disordered. Over residues 82–100 (PGKELRDRVNEDEHEEAHT) the composition is skewed to basic and acidic residues.

It belongs to the bacterial histone-like protein family. In terms of assembly, heterodimer of an alpha and a beta chain.

This protein is one of the two subunits of integration host factor, a specific DNA-binding protein that functions in genetic recombination as well as in transcriptional and translational control. This is Integration host factor subunit beta (ihfB) from Pseudomonas putida (Arthrobacter siderocapsulatus).